A 965-amino-acid chain; its full sequence is Argonaute protein wago-4 (965 aa).

The tract at residues Met1 to Arg34 is disordered. The segment covering Pro10–Pro20 has biased composition (low complexity). Residues Pro21–Thr30 are compositionally biased toward pro residues. Residues Pro318–Ser428 enclose the PAZ domain. The Piwi domain occupies Thr594–Asn924.

Belongs to the argonaute family. WAGO subfamily. In terms of assembly, interacts with znfx-1; the interaction promotes the transmission of epigenetic information across generations. May interact with mina-1. As to expression, expressed in the hermaphrodite germline and in oocytes. Expressed at a low level in the male germline. Not expressed in the soma of hermaphrodites or males.

The protein resides in the cytoplasm. It localises to the perinuclear region. Its subcellular location is the cytoplasmic granule. Its function is as follows. Argonaute protein which is involved in the endogenous small interfering RNA (endo-siRNA) pathway and is required for RNA-mediated gene silencing (RNAi) in the germline. Interacts with secondary 22G-RNAs, which are RNA-dependent RNA polymerase-derived endo-siRNAs, typically 22 nucleotides in length with a 5'guanosine residue. Also interacts with the mRNA targets of 22G-RNAs. Associates with znfx-1 to mediate small RNA-directed transgenerational epigenetic inheritance of both germline- and soma-expressed genes. The polypeptide is Argonaute protein wago-4 (Caenorhabditis elegans).